A 285-amino-acid chain; its full sequence is Protoheme IX farnesyltransferase (285 aa).

9 helical membrane-spanning segments follow: residues leucine 13 to alanine 33, leucine 40 to isoleucine 60, glutamate 89 to asparagine 109, isoleucine 110 to leucine 130, leucine 137 to leucine 157, glycine 165 to leucine 185, alanine 194 to isoleucine 214, isoleucine 230 to leucine 252, and phenylalanine 265 to isoleucine 285.

This sequence belongs to the UbiA prenyltransferase family. Protoheme IX farnesyltransferase subfamily.

Its subcellular location is the cell membrane. It carries out the reaction heme b + (2E,6E)-farnesyl diphosphate + H2O = Fe(II)-heme o + diphosphate. It functions in the pathway porphyrin-containing compound metabolism; heme O biosynthesis; heme O from protoheme: step 1/1. Its function is as follows. Converts heme B (protoheme IX) to heme O by substitution of the vinyl group on carbon 2 of heme B porphyrin ring with a hydroxyethyl farnesyl side group. In Saccharolobus islandicus (strain Y.N.15.51 / Yellowstone #2) (Sulfolobus islandicus), this protein is Protoheme IX farnesyltransferase.